Reading from the N-terminus, the 472-residue chain is NADH-quinone oxidoreductase subunit N (472 aa).

Helical transmembrane passes span 11 to 31 (AELS…FLPA), 43 to 63 (ILLT…LFGG), 67 to 87 (STPM…LVFL), 103 to 123 (GEFY…VSAG), 125 to 145 (FLLF…LVAF), 159 to 179 (FILS…MIYG), 200 to 220 (VLAL…VPFH), 234 to 254 (VSAY…MIIL), 265 to 285 (WSEI…LFAI), 293 to 313 (FMAF…LAGT), 318 to 338 (ASLV…FGVI), 362 to 384 (PKLT…FAGF), 401 to 421 (LIVF…LLIV), and 446 to 466 (LLVC…YQLL).

It belongs to the complex I subunit 2 family. As to quaternary structure, NDH-1 is composed of 14 different subunits. Subunits NuoA, H, J, K, L, M, N constitute the membrane sector of the complex.

It is found in the cell inner membrane. It carries out the reaction a quinone + NADH + 5 H(+)(in) = a quinol + NAD(+) + 4 H(+)(out). Its function is as follows. NDH-1 shuttles electrons from NADH, via FMN and iron-sulfur (Fe-S) centers, to quinones in the respiratory chain. The immediate electron acceptor for the enzyme in this species is believed to be a menaquinone. Couples the redox reaction to proton translocation (for every two electrons transferred, four hydrogen ions are translocated across the cytoplasmic membrane), and thus conserves the redox energy in a proton gradient. This chain is NADH-quinone oxidoreductase subunit N, found in Phocaeicola vulgatus (strain ATCC 8482 / DSM 1447 / JCM 5826 / CCUG 4940 / NBRC 14291 / NCTC 11154) (Bacteroides vulgatus).